The following is a 467-amino-acid chain: DNA methyltransferase 1-associated protein 1 (467 aa).

Composition is skewed to basic and acidic residues over residues 1 to 11 and 26 to 48; these read MATGADVRDIL and SKKDIINPDKKKSKKSSETLTFK. Residues 1-48 form a disordered region; the sequence is MATGADVRDILELGGPEGDAASGTISKKDIINPDKKKSKKSSETLTFK. K27 participates in a covalent cross-link: Glycyl lysine isopeptide (Lys-Gly) (interchain with G-Cter in SUMO2). One can recognise an SANT domain in the interval 149-199; sequence DDAWTKAETDHLFDLSRRFDLRFVVIHDRYDHQQFKKRSVEDLKERYYHIC. Residue K214 forms a Glycyl lysine isopeptide (Lys-Gly) (interchain with G-Cter in SUMO2) linkage. The stretch at 225–275 forms a coiled coil; the sequence is RRKEQLERLYNRTPEQVAEEEYLLQELRKIEARKKEREKRSQDLQKLITAA. The segment covering 258 to 267 has biased composition (basic and acidic residues); that stretch reads KKEREKRSQD. Disordered regions lie at residues 258–305 and 404–467; these read KKER…PAVP and LGGP…AKKP. Positions 406–422 are enriched in low complexity; that stretch reads GPATPASGPGPASAEPA. The residue at position 445 (T445) is a Phosphothreonine. The residue at position 448 (S448) is a Phosphoserine.

As to quaternary structure, component of the NuA4 histone acetyltransferase complex which contains the catalytic subunit KAT5/TIP60 and the subunits EP400, TRRAP/PAF400, BRD8/SMAP, EPC1, DMAP1/DNMAP1, RUVBL1/TIP49, RUVBL2, ING3, actin, ACTL6A/BAF53A, MORF4L1/MRG15, MORF4L2/MRGX, MRGBP, YEATS4/GAS41, VPS72/YL1 and MEAF6. Component of a NuA4-related complex which contains EP400, TRRAP/PAF400, SRCAP, BRD8/SMAP, EPC1, DMAP1/DNMAP1, RUVBL1/TIP49, RUVBL2, actin, ACTL6A/BAF53A, VPS72 and YEATS4/GAS41. DMAP1 also forms a complex with DNMT1 and HDAC2. Throughout S phase it interacts directly with the N-terminus of DNMT1, which serves to recruit DMAP1 to replication foci. DMAP1 interacts with ING1, a component of the mSin3A transcription repressor complex, although this interaction is not required for recruitment of ING1 to heterochromatin. Interacts directly with the transcriptional corepressor TSG101. Interacts with the pro-apoptotic protein DAXX. Interacts with URI1.

It is found in the nucleus. Its subcellular location is the cytoplasm. In terms of biological role, involved in transcription repression and activation. Its interaction with HDAC2 may provide a mechanism for histone deacetylation in heterochromatin following replication of DNA at late firing origins. Can also repress transcription independently of histone deacetylase activity. May specifically potentiate DAXX-mediated repression of glucocorticoid receptor-dependent transcription. Component of the NuA4 histone acetyltransferase (HAT) complex which is involved in transcriptional activation of select genes principally by acetylation of nucleosomal histones H4 and H2A. This modification may both alter nucleosome - DNA interactions and promote interaction of the modified histones with other proteins which positively regulate transcription. This complex may be required for the activation of transcriptional programs associated with oncogene and proto-oncogene mediated growth induction, tumor suppressor mediated growth arrest and replicative senescence, apoptosis, and DNA repair. NuA4 may also play a direct role in DNA repair when recruited to sites of DNA damage. Participates in the nuclear localization of URI1 and increases its transcriptional corepressor activity. The chain is DNA methyltransferase 1-associated protein 1 (DMAP1) from Homo sapiens (Human).